A 255-amino-acid chain; its full sequence is Type III pantothenate kinase (255 aa).

Position 6–13 (6–13 (DIGNTNIK)) interacts with ATP. Residue 107–110 (GADR) coordinates substrate. Residue aspartate 109 is the Proton acceptor of the active site. ATP is bound at residue threonine 132. Residue threonine 184 participates in substrate binding.

It belongs to the type III pantothenate kinase family. As to quaternary structure, homodimer. Requires NH4(+) as cofactor. K(+) serves as cofactor.

The protein resides in the cytoplasm. The enzyme catalyses (R)-pantothenate + ATP = (R)-4'-phosphopantothenate + ADP + H(+). It functions in the pathway cofactor biosynthesis; coenzyme A biosynthesis; CoA from (R)-pantothenate: step 1/5. In terms of biological role, catalyzes the phosphorylation of pantothenate (Pan), the first step in CoA biosynthesis. This Roseiflexus castenholzii (strain DSM 13941 / HLO8) protein is Type III pantothenate kinase.